The primary structure comprises 394 residues: GDP-mannose transporter (394 aa).

The Cytoplasmic portion of the chain corresponds to 1–56 (MSNKKNEDIEMRAVEGANDFGGEKDPFLGRNSPVLRPRGREPTASAYFGKLDNSPG). The chain crosses the membrane as a helical span at residues 57–77 (ASIIAYCLSSISMTVVNKYVV). Topologically, residues 78–81 (SGES) are lumenal. Residues 82 to 102 (WNLNFFYLGVQSLVCTIAILL) traverse the membrane as a helical segment. The Cytoplasmic segment spans residues 103 to 122 (SRQTGLIKNLAPFDSNKAKR). Residues 123–145 (WFPVSLLLVSMIYTGANALQYLS) form a helical membrane-spanning segment. At 146-150 (VPVYT) the chain is on the lumenal side. Residues 151 to 168 (IFKNLTIIVIAYGEVLWF) form a helical membrane-spanning segment. Topologically, residues 169 to 174 (GGSVTP) are cytoplasmic. The chain crosses the membrane as a helical span at residues 175–199 (LMLLSFGLMVLSSVVAAWADIQAAI). Residues 200–207 (DGVGHSAE) are Lumenal-facing. Residues 208 to 228 (TSAALATLNAGYAWMGLNVVC) form a helical membrane-spanning segment. Residues 229–249 (TSSYLLGMRKVIKKMNFKDYD) are Cytoplasmic-facing. The helical transmembrane segment at 250–270 (SMFYNNLLTIPVLVVCSLLVE) threads the bilayer. Topologically, residues 271–288 (DWSSENLAKNFPIETRNK) are lumenal. Residues 289 to 309 (LMVGMIYSGLAAIFISYCSAW) form a helical membrane-spanning segment. Over 310–317 (CIRVTSST) the chain is Cytoplasmic. Residues 318–338 (TYSMVGALNKLPIAISGLIFF) form a helical membrane-spanning segment. Topologically, residues 339-341 (DAP) are lumenal. Residues 342–362 (ITFGSITAIAVGFVSGLVFAW) traverse the membrane as a helical segment. Topologically, residues 363 to 394 (AKVRQKAQEAGLLPTTKPTMSASAQSNRDANS) are cytoplasmic.

The protein belongs to the TPT transporter family. SLC35D subfamily. Homooligomer.

It is found in the golgi apparatus membrane. The protein resides in the cytoplasmic vesicle membrane. It localises to the endoplasmic reticulum membrane. Its function is as follows. Involved in the import of GDP-mannose from the cytoplasm into the Golgi lumen. This is GDP-mannose transporter (VRG4) from Chaetomium globosum (strain ATCC 6205 / CBS 148.51 / DSM 1962 / NBRC 6347 / NRRL 1970) (Soil fungus).